We begin with the raw amino-acid sequence, 337 residues long: MSDFKAILAKLADGKSLSRDEAVAAFDHLMSGEATPSQIGGALMAMRVRGETVDEITGAVSTMRAKMLRVTAPDDAVDVVGTGGDGSGSVNVSTCAAFIVAGAGVPVAKHGNRAMSSKSGAADVLASLGVNIELTPEQVGACIAKAGIGFMFAPAHHPAIRHVGPTRKELGTRTIFNLLGPLSNPAGVKRQMIGVFAKHWVEPVAQVLKNLGATAAWVVHGSDGLDEITLTGPTYVTELANGVTRSFTVTPEDGGLATVANADLRGGDATANAAALAAVLNGVKNDYRDVALLNAGAALVVAGKAHDLKEGVALGIKSLDSGAAADKLAQLVAVSRA.

Residues Gly-81, 84–85 (GD), Ser-89, 91–94 (NVST), 109–117 (KHGNRAMSS), and Ala-121 each bind 5-phospho-alpha-D-ribose 1-diphosphate. Residue Gly-81 coordinates anthranilate. Mg(2+) is bound at residue Ser-93. Asn-112 lines the anthranilate pocket. Arg-167 contributes to the anthranilate binding site. 2 residues coordinate Mg(2+): Asp-226 and Glu-227.

The protein belongs to the anthranilate phosphoribosyltransferase family. Homodimer. Mg(2+) is required as a cofactor.

It carries out the reaction N-(5-phospho-beta-D-ribosyl)anthranilate + diphosphate = 5-phospho-alpha-D-ribose 1-diphosphate + anthranilate. The protein operates within amino-acid biosynthesis; L-tryptophan biosynthesis; L-tryptophan from chorismate: step 2/5. Its function is as follows. Catalyzes the transfer of the phosphoribosyl group of 5-phosphorylribose-1-pyrophosphate (PRPP) to anthranilate to yield N-(5'-phosphoribosyl)-anthranilate (PRA). This Afipia carboxidovorans (strain ATCC 49405 / DSM 1227 / KCTC 32145 / OM5) (Oligotropha carboxidovorans) protein is Anthranilate phosphoribosyltransferase.